The chain runs to 111 residues: ATP-dependent Clp protease adapter protein ClpS (111 aa).

This sequence belongs to the ClpS family. Binds to the N-terminal domain of the chaperone ClpA.

Its function is as follows. Involved in the modulation of the specificity of the ClpAP-mediated ATP-dependent protein degradation. This chain is ATP-dependent Clp protease adapter protein ClpS, found in Legionella pneumophila (strain Paris).